We begin with the raw amino-acid sequence, 301 residues long: NADH-cytochrome b5 reductase 3 (301 aa).

Gly2 is lipidated: N-myristoyl glycine. In terms of domain architecture, FAD-binding FR-type spans 40-152; it reads DIKYPLRLID…RGPSGLLVYQ (113 aa). Lys42 carries the post-translational modification N6-acetyllysine. Phosphotyrosine is present on Tyr43. Residues Arg92, Pro93, Tyr94, Val109, Lys111, and Phe114 each coordinate FAD. Lys120 is modified (N6-acetyllysine). 4 residues coordinate FAD: Lys126, Met127, Ser128, and Thr185.

This sequence belongs to the flavoprotein pyridine nucleotide cytochrome reductase family. Component of a complex composed of cytochrome b5, NADH-cytochrome b5 reductase (CYB5R3) and MTARC2. Interacts with MTLN; the interaction is required to maintain cellular lipid composition and leads to stimulation of mitochondrial respiratory complex I activity. Requires FAD as cofactor. In terms of tissue distribution, expressed at late stages of erythroid maturation.

Its subcellular location is the endoplasmic reticulum membrane. The protein localises to the mitochondrion outer membrane. It is found in the cytoplasm. The enzyme catalyses 2 Fe(III)-[cytochrome b5] + NADH = 2 Fe(II)-[cytochrome b5] + NAD(+) + H(+). Functionally, catalyzes the reduction of two molecules of cytochrome b5 using NADH as the electron donor. The sequence is that of NADH-cytochrome b5 reductase 3 from Homo sapiens (Human).